The primary structure comprises 1379 residues: DNA-directed RNA polymerase subunit beta'' (1379 aa).

Cysteine 220, cysteine 291, cysteine 298, and cysteine 301 together coordinate Zn(2+).

Belongs to the RNA polymerase beta' chain family. RpoC2 subfamily. As to quaternary structure, in plastids the minimal PEP RNA polymerase catalytic core is composed of four subunits: alpha, beta, beta', and beta''. When a (nuclear-encoded) sigma factor is associated with the core the holoenzyme is formed, which can initiate transcription. It depends on Zn(2+) as a cofactor.

It is found in the plastid. The enzyme catalyses RNA(n) + a ribonucleoside 5'-triphosphate = RNA(n+1) + diphosphate. Its function is as follows. DNA-dependent RNA polymerase catalyzes the transcription of DNA into RNA using the four ribonucleoside triphosphates as substrates. This Cuscuta reflexa (Southern Asian dodder) protein is DNA-directed RNA polymerase subunit beta''.